A 570-amino-acid polypeptide reads, in one-letter code: Sulfite reductase [NADPH] hemoprotein beta-component (570 aa).

Residues Cys-434, Cys-440, Cys-479, and Cys-483 each coordinate [4Fe-4S] cluster. Residue Cys-483 coordinates siroheme.

This sequence belongs to the nitrite and sulfite reductase 4Fe-4S domain family. As to quaternary structure, alpha(8)-beta(8). The alpha component is a flavoprotein, the beta component is a hemoprotein. Siroheme serves as cofactor. [4Fe-4S] cluster is required as a cofactor.

It carries out the reaction hydrogen sulfide + 3 NADP(+) + 3 H2O = sulfite + 3 NADPH + 4 H(+). Its pathway is sulfur metabolism; hydrogen sulfide biosynthesis; hydrogen sulfide from sulfite (NADPH route): step 1/1. Its function is as follows. Component of the sulfite reductase complex that catalyzes the 6-electron reduction of sulfite to sulfide. This is one of several activities required for the biosynthesis of L-cysteine from sulfate. This chain is Sulfite reductase [NADPH] hemoprotein beta-component, found in Escherichia coli (strain SMS-3-5 / SECEC).